We begin with the raw amino-acid sequence, 96 residues long: MSRSCELTGKGVQSGHNVSHANNKTKRKFLPNLCNVTLISDALGQRFRLRVSAAALRSVEHRGGLDAFLLKADENELSMRARLLRRQIVKKAAEAA.

Residues 1-24 (MSRSCELTGKGVQSGHNVSHANNK) are disordered.

The protein belongs to the bacterial ribosomal protein bL28 family.

This chain is Large ribosomal subunit protein bL28, found in Sinorhizobium fredii (strain NBRC 101917 / NGR234).